Consider the following 439-residue polypeptide: Kinesin-like protein KIN-13 (439 aa).

Residue 1-5 (GSGKS) participates in ATP binding. The Kinesin motor domain maps to 1 to 240 (GSGKSFTMMH…LRYADRVKEL (240 aa)).

The protein belongs to the TRAFAC class myosin-kinesin ATPase superfamily. Kinesin family. KIN-13 subfamily. As to quaternary structure, interacts with PLK. Post-translationally, phosphorylated by PLK.

It localises to the cytoplasm. The protein resides in the cytoskeleton. It is found in the cell projection. Its subcellular location is the cilium. The protein localises to the flagellum. It localises to the flagellum basal body. The protein resides in the flagellum axoneme. It is found in the spindle. Its subcellular location is the chromosome. The protein localises to the centromere. It localises to the kinetochore. In terms of biological role, involved in cell cycle. Involved in formation of flagella, regulation of flagellar length, and formation of median bodies during interphase. Regulates flagellar length in all eight distal flagellar tips by promoting disassembly of the microtubules. Disassembles microtubules at the distal flagellar tips in a length-dependent manner in order to maintain different equilibrium lengths of the four flagellar pairs. Regulates interphase and mitotic microtubule dynamics. Regulates microtubule disassembly dynamics of the dual mitotic spindles and the median body. The sequence is that of Kinesin-like protein KIN-13 from Giardia intestinalis (Giardia lamblia).